Reading from the N-terminus, the 173-residue chain is U1 small nuclear ribonucleoprotein C (173 aa).

The Matrin-type zinc-finger motif lies at 4–36 (YYCDYCDTYLTHDSPSVRKTHCQGRKHKDNVKF). The interval 72 to 100 (AAIPPPANMQGPPRPVPPGPMGPGPNMLG) is disordered. Residues 73 to 94 (AIPPPANMQGPPRPVPPGPMGP) show a composition bias toward pro residues.

It belongs to the U1 small nuclear ribonucleoprotein C family. U1 snRNP is composed of the 7 core Sm proteins B/B', D1, D2, D3, E, F and G that assemble in a heptameric protein ring on the Sm site of the small nuclear RNA to form the core snRNP, and at least 3 U1 snRNP-specific proteins U1-70K, U1-A and U1-C. U1-C interacts with U1 snRNA and the 5' splice-site region of the pre-mRNA.

It is found in the nucleus. Component of the spliceosomal U1 snRNP, which is essential for recognition of the pre-mRNA 5' splice-site and the subsequent assembly of the spliceosome. U1-C is directly involved in initial 5' splice-site recognition for both constitutive and regulated alternative splicing. The interaction with the 5' splice-site seems to precede base-pairing between the pre-mRNA and the U1 snRNA. Stimulates commitment or early (E) complex formation by stabilizing the base pairing of the 5' end of the U1 snRNA and the 5' splice-site region. The protein is U1 small nuclear ribonucleoprotein C of Pediculus humanus subsp. corporis (Body louse).